Reading from the N-terminus, the 259-residue chain is Ribosomal RNA small subunit methyltransferase J (259 aa).

Residues 101–102 (RD), 117–118 (ER), 153–154 (SS), and Asp176 contribute to the S-adenosyl-L-methionine site.

Belongs to the methyltransferase superfamily. RsmJ family.

It is found in the cytoplasm. The enzyme catalyses guanosine(1516) in 16S rRNA + S-adenosyl-L-methionine = N(2)-methylguanosine(1516) in 16S rRNA + S-adenosyl-L-homocysteine + H(+). Functionally, specifically methylates the guanosine in position 1516 of 16S rRNA. This chain is Ribosomal RNA small subunit methyltransferase J, found in Vibrio parahaemolyticus serotype O3:K6 (strain RIMD 2210633).